Consider the following 171-residue polypeptide: Endoribonuclease YbeY (171 aa).

Residues H130, H134, and H140 each coordinate Zn(2+).

It belongs to the endoribonuclease YbeY family. Zn(2+) serves as cofactor.

It is found in the cytoplasm. Functionally, single strand-specific metallo-endoribonuclease involved in late-stage 70S ribosome quality control and in maturation of the 3' terminus of the 16S rRNA. In Neisseria gonorrhoeae (strain ATCC 700825 / FA 1090), this protein is Endoribonuclease YbeY.